The primary structure comprises 125 residues: Large ribosomal subunit protein bL20 (125 aa).

Belongs to the bacterial ribosomal protein bL20 family.

In terms of biological role, binds directly to 23S ribosomal RNA and is necessary for the in vitro assembly process of the 50S ribosomal subunit. It is not involved in the protein synthesizing functions of that subunit. This chain is Large ribosomal subunit protein bL20, found in Methylobacterium nodulans (strain LMG 21967 / CNCM I-2342 / ORS 2060).